The sequence spans 365 residues: Outer membrane protein assembly factor BamC (365 aa).

The signal sequence occupies residues 1-16 (MLKKVTPLFLVAAVAA). Cysteine 17 is lipidated: N-palmitoyl cysteine. Cysteine 17 carries the S-diacylglycerol cysteine lipid modification.

This sequence belongs to the BamC family. Part of the Bam complex.

The protein resides in the cell outer membrane. In terms of biological role, part of the outer membrane protein assembly complex, which is involved in assembly and insertion of beta-barrel proteins into the outer membrane. The polypeptide is Outer membrane protein assembly factor BamC (Shewanella oneidensis (strain ATCC 700550 / JCM 31522 / CIP 106686 / LMG 19005 / NCIMB 14063 / MR-1)).